The chain runs to 300 residues: MHSLKKVTFEDVAIDFTQEEWAMMDTSKRKLYRDVMLENISHLVSLGYQISKSYIILQLEQGKELWQEGREFLQDQNPDRESALKKTHMISMHPIIRKDAPTSMTMENSLILEDPFECNDSGEDCTHSSTIIQCLLTHSGKKPYVSKQCGKSLSNLLSPKPHKQIHTKGKSYQCNLCEKAYTNCFHLRRPKMTHTGERPYTCHLCRKAFTQCSHLRRHEKTHTGERPYKCHQCGKAFIQSFNLRRHERTHLGEKWYECDNSGKAFSQSSGFRGNKIIHTGEKPHACLLCGKAFSLSSDLR.

The 72-residue stretch at Val7–Pro78 folds into the KRAB domain. The C2H2-type 1; degenerate zinc-finger motif lies at Tyr172–His194. 2 C2H2-type zinc fingers span residues Tyr200–His222 and Tyr228–His250. Residues Tyr256 to His278 form a C2H2-type 4; degenerate zinc finger.

It belongs to the krueppel C2H2-type zinc-finger protein family.

It localises to the nucleus. May be involved in transcriptional regulation. The protein is Putative zinc finger protein 705EP of Homo sapiens (Human).